The sequence spans 342 residues: S-adenosylmethionine:tRNA ribosyltransferase-isomerase (342 aa).

Belongs to the QueA family. As to quaternary structure, monomer.

The protein resides in the cytoplasm. The catalysed reaction is 7-aminomethyl-7-carbaguanosine(34) in tRNA + S-adenosyl-L-methionine = epoxyqueuosine(34) in tRNA + adenine + L-methionine + 2 H(+). Its pathway is tRNA modification; tRNA-queuosine biosynthesis. Functionally, transfers and isomerizes the ribose moiety from AdoMet to the 7-aminomethyl group of 7-deazaguanine (preQ1-tRNA) to give epoxyqueuosine (oQ-tRNA). This is S-adenosylmethionine:tRNA ribosyltransferase-isomerase from Listeria innocua serovar 6a (strain ATCC BAA-680 / CLIP 11262).